The chain runs to 146 residues: Acidic phospholipase A2 2 (146 aa).

The first 21 residues, 1–21 (MNPAHLLILAAVCVSSLGASS), serve as a signal peptide directing secretion. The propeptide occupies 22-27 (NRPMPL). 7 disulfides stabilise this stretch: C38-C98, C53-C145, C55-C71, C70-C126, C77-C119, C87-C112, and C105-C117. Residues Y54, G56, and G58 each coordinate Ca(2+). H74 is an active-site residue. Ca(2+) is bound at residue D75. D120 is a catalytic residue.

It belongs to the phospholipase A2 family. Group I subfamily. D49 sub-subfamily. Requires Ca(2+) as cofactor. As to expression, expressed by the venom gland.

The protein localises to the secreted. It catalyses the reaction a 1,2-diacyl-sn-glycero-3-phosphocholine + H2O = a 1-acyl-sn-glycero-3-phosphocholine + a fatty acid + H(+). Functionally, PLA2 catalyzes the calcium-dependent hydrolysis of the 2-acyl groups in 3-sn-phosphoglycerides. The sequence is that of Acidic phospholipase A2 2 from Naja kaouthia (Monocled cobra).